A 2201-amino-acid chain; its full sequence is RNA-directed RNA polymerase L (2201 aa).

Residues 26–285 (KNIMLAQTQI…VCSKSVEYTF (260 aa)) are endonuclease. Residues glutamate 51, aspartate 88, and glutamate 101 each contribute to the Mn(2+) site. The active site involves lysine 114. The 197-residue stretch at 1156 to 1352 (LDMKSVVRQS…FLSDRLNKFV (197 aa)) folds into the RdRp catalytic domain. Aspartate 1312 lines the Mg(2+) pocket.

It belongs to the Bunyavirales RNA polymerase family. As to quaternary structure, homomultimer; the oligomeric structure is essential for the polymerase activity. Interacts with nucleoprotein N. Interacts with protein Z; this interaction inhibits viral transcription and replication, Z partially blocks the product exit tunnel for the releasing nascent RNA product. Mn(2+) is required as a cofactor. It depends on Mg(2+) as a cofactor.

The protein resides in the virion. It is found in the host cytoplasm. The enzyme catalyses RNA(n) + a ribonucleoside 5'-triphosphate = RNA(n+1) + diphosphate. Its function is as follows. RNA-dependent RNA polymerase, which is responsible for the replication and transcription of the viral RNA genome using antigenomic RNA as an intermediate. During transcription, synthesizes subgenomic RNAs and assures their capping by a cap-snatching mechanism, which involves the endonuclease activity cleaving the host capped pre-mRNAs. These short capped RNAs are then used as primers for viral transcription. The 3'-end of subgenomic mRNAs molecules are heterogeneous and not polyadenylated. The replicase function is to direct synthesis of antigenomic and genomic RNA which are encapsidated and non capped. As a consequence of the use of the same enzyme for both transcription and replication, these mechanisms need to be well coordinated. These processes may be regulated by proteins N and Z in a dose-dependent manner. Z protein inhibits the viral polymerase L und thus the viral transcription and RNA synthesis. The protein is RNA-directed RNA polymerase L of Oecomys bicolor (Bicolored arboreal rice rat).